The primary structure comprises 157 residues: Large ribosomal subunit protein uL11 (157 aa).

It belongs to the universal ribosomal protein uL11 family. In terms of assembly, part of the ribosomal stalk of the 50S ribosomal subunit. Interacts with L10 and the large rRNA to form the base of the stalk. L10 forms an elongated spine to which L12 dimers bind in a sequential fashion forming a multimeric L10(L12)X complex.

Its function is as follows. Forms part of the ribosomal stalk which helps the ribosome interact with GTP-bound translation factors. The sequence is that of Large ribosomal subunit protein uL11 from Archaeoglobus fulgidus (strain ATCC 49558 / DSM 4304 / JCM 9628 / NBRC 100126 / VC-16).